The sequence spans 295 residues: Small ribosomal subunit protein uS2 (295 aa).

A disordered region spans residues Trp273–Trp295. A compositionally biased stretch (low complexity) spans Ala274–Trp295.

It belongs to the universal ribosomal protein uS2 family. In terms of assembly, component of the small ribosomal subunit. Mature ribosomes consist of a small (40S) and a large (60S) subunit. The 40S subunit contains about 33 different proteins and 1 molecule of RNA (18S). The 60S subunit contains about 49 different proteins and 3 molecules of RNA (25S, 5.8S and 5S). Interacts with RPS21.

Its subcellular location is the cytoplasm. In terms of biological role, required for the assembly and/or stability of the 40S ribosomal subunit. Required for the processing of the 20S rRNA-precursor to mature 18S rRNA in a late step of the maturation of 40S ribosomal subunits. This is Small ribosomal subunit protein uS2 from Paracoccidioides lutzii (strain ATCC MYA-826 / Pb01) (Paracoccidioides brasiliensis).